Here is a 217-residue protein sequence, read N- to C-terminus: Imidazole glycerol phosphate synthase subunit HisH (217 aa).

Residues 1 to 212 form the Glutamine amidotransferase type-1 domain; sequence MLAILDYKAG…YEYCRQSRQE (212 aa). Cysteine 79 (nucleophile) is an active-site residue. Active-site residues include histidine 187 and glutamate 189.

In terms of assembly, heterodimer of HisH and HisF.

Its subcellular location is the cytoplasm. It carries out the reaction 5-[(5-phospho-1-deoxy-D-ribulos-1-ylimino)methylamino]-1-(5-phospho-beta-D-ribosyl)imidazole-4-carboxamide + L-glutamine = D-erythro-1-(imidazol-4-yl)glycerol 3-phosphate + 5-amino-1-(5-phospho-beta-D-ribosyl)imidazole-4-carboxamide + L-glutamate + H(+). The catalysed reaction is L-glutamine + H2O = L-glutamate + NH4(+). It participates in amino-acid biosynthesis; L-histidine biosynthesis; L-histidine from 5-phospho-alpha-D-ribose 1-diphosphate: step 5/9. Its function is as follows. IGPS catalyzes the conversion of PRFAR and glutamine to IGP, AICAR and glutamate. The HisH subunit catalyzes the hydrolysis of glutamine to glutamate and ammonia as part of the synthesis of IGP and AICAR. The resulting ammonia molecule is channeled to the active site of HisF. The protein is Imidazole glycerol phosphate synthase subunit HisH of Desulfovibrio desulfuricans (strain ATCC 27774 / DSM 6949 / MB).